The chain runs to 123 residues: MEKIKVYELRNKTDAELLKQLEDLKQEYASMRVQKVTVTSTSKLSQIGVIRKAIAKVLTVYNQRKREEARKQYTKISEMPLNMRPKLTRAKRRALTPKQLHLKTIKQRKKCENFPKRKYALLV.

Belongs to the universal ribosomal protein uL29 family.

In Babesia bovis, this protein is Large ribosomal subunit protein uL29 (RPL35).